An 86-amino-acid chain; its full sequence is Large ribosomal subunit protein bL27 (86 aa).

The interval 1 to 24 is disordered; it reads MATKKAGGSSRNGRDSAGRRLGVK.

The protein belongs to the bacterial ribosomal protein bL27 family.

This Rickettsia felis (strain ATCC VR-1525 / URRWXCal2) (Rickettsia azadi) protein is Large ribosomal subunit protein bL27.